A 520-amino-acid chain; its full sequence is 2-isopropylmalate synthase (520 aa).

Positions 12–274 constitute a Pyruvate carboxyltransferase domain; it reads VLIFDTTLRD…TTGIDTTQIM (263 aa). 4 residues coordinate Mn(2+): D21, H209, H211, and N245. A regulatory domain region spans residues 398–520; that stretch reads RLLSLTVIAG…RLHAQHAAAE (123 aa).

It belongs to the alpha-IPM synthase/homocitrate synthase family. LeuA type 1 subfamily. In terms of assembly, homodimer. Mn(2+) serves as cofactor.

Its subcellular location is the cytoplasm. It catalyses the reaction 3-methyl-2-oxobutanoate + acetyl-CoA + H2O = (2S)-2-isopropylmalate + CoA + H(+). The protein operates within amino-acid biosynthesis; L-leucine biosynthesis; L-leucine from 3-methyl-2-oxobutanoate: step 1/4. Its function is as follows. Catalyzes the condensation of the acetyl group of acetyl-CoA with 3-methyl-2-oxobutanoate (2-ketoisovalerate) to form 3-carboxy-3-hydroxy-4-methylpentanoate (2-isopropylmalate). This is 2-isopropylmalate synthase from Methylobacterium nodulans (strain LMG 21967 / CNCM I-2342 / ORS 2060).